We begin with the raw amino-acid sequence, 227 residues long: Ribose-5-phosphate isomerase A (227 aa).

Residues 26–29, 82–85, and 95–98 contribute to the substrate site; these read TGST, DGAD, and KGGG. Catalysis depends on Glu104, which acts as the Proton acceptor. Lys122 is a binding site for substrate.

The protein belongs to the ribose 5-phosphate isomerase family. Homodimer.

It carries out the reaction aldehydo-D-ribose 5-phosphate = D-ribulose 5-phosphate. Its pathway is carbohydrate degradation; pentose phosphate pathway; D-ribose 5-phosphate from D-ribulose 5-phosphate (non-oxidative stage): step 1/1. Catalyzes the reversible conversion of ribose-5-phosphate to ribulose 5-phosphate. This chain is Ribose-5-phosphate isomerase A, found in Streptococcus pneumoniae (strain Hungary19A-6).